A 338-amino-acid polypeptide reads, in one-letter code: Ketol-acid reductoisomerase (NADP(+)) (338 aa).

Residues 1-181 (MKVFYDKDAD…GGGRAGIIET (181 aa)) enclose the KARI N-terminal Rossmann domain. NADP(+) is bound by residues 24–27 (YGSQ), Arg47, and Ser52. Residue His107 is part of the active site. Gly133 lines the NADP(+) pocket. Residues 182-327 (NFREETETDL…EKLRAMMPWI (146 aa)) enclose the KARI C-terminal knotted domain. Asp190, Glu194, Glu226, and Glu230 together coordinate Mg(2+). Residue Ser251 participates in substrate binding.

Belongs to the ketol-acid reductoisomerase family. Mg(2+) serves as cofactor.

The enzyme catalyses (2R)-2,3-dihydroxy-3-methylbutanoate + NADP(+) = (2S)-2-acetolactate + NADPH + H(+). It catalyses the reaction (2R,3R)-2,3-dihydroxy-3-methylpentanoate + NADP(+) = (S)-2-ethyl-2-hydroxy-3-oxobutanoate + NADPH + H(+). The protein operates within amino-acid biosynthesis; L-isoleucine biosynthesis; L-isoleucine from 2-oxobutanoate: step 2/4. Its pathway is amino-acid biosynthesis; L-valine biosynthesis; L-valine from pyruvate: step 2/4. Its function is as follows. Involved in the biosynthesis of branched-chain amino acids (BCAA). Catalyzes an alkyl-migration followed by a ketol-acid reduction of (S)-2-acetolactate (S2AL) to yield (R)-2,3-dihydroxy-isovalerate. In the isomerase reaction, S2AL is rearranged via a Mg-dependent methyl migration to produce 3-hydroxy-3-methyl-2-ketobutyrate (HMKB). In the reductase reaction, this 2-ketoacid undergoes a metal-dependent reduction by NADPH to yield (R)-2,3-dihydroxy-isovalerate. The polypeptide is Ketol-acid reductoisomerase (NADP(+)) (Cupriavidus pinatubonensis (strain JMP 134 / LMG 1197) (Cupriavidus necator (strain JMP 134))).